A 147-amino-acid chain; its full sequence is Cytochrome c-type biogenesis protein CcmE (147 aa).

Residues 1–7 (MKPRHKR) are Cytoplasmic-facing. Residues 8–28 (AAIIAGGLAALGIAAYLVLNA) traverse the membrane as a helical; Signal-anchor for type II membrane protein segment. At 29–147 (FQSNLVFFFS…QIQKTIKSLK (119 aa)) the chain is on the periplasmic side. Residues His121 and Tyr125 each contribute to the heme site.

The protein belongs to the CcmE/CycJ family.

The protein resides in the cell inner membrane. In terms of biological role, heme chaperone required for the biogenesis of c-type cytochromes. Transiently binds heme delivered by CcmC and transfers the heme to apo-cytochromes in a process facilitated by CcmF and CcmH. This chain is Cytochrome c-type biogenesis protein CcmE, found in Albidiferax ferrireducens (strain ATCC BAA-621 / DSM 15236 / T118) (Rhodoferax ferrireducens).